The sequence spans 478 residues: Pyruvate kinase (478 aa).

Arg-36 lines the substrate pocket. Positions 38, 40, and 70 each coordinate K(+). Asn-38–His-41 contributes to the ATP binding site. Arg-77 and Lys-160 together coordinate ATP. Residue Glu-225 coordinates Mg(2+). Substrate-binding residues include Gly-251, Asp-252, and Thr-284. Position 252 (Asp-252) interacts with Mg(2+).

Belongs to the pyruvate kinase family. Homotetramer. Mg(2+) is required as a cofactor. Requires K(+) as cofactor.

The catalysed reaction is pyruvate + ATP = phosphoenolpyruvate + ADP + H(+). It functions in the pathway carbohydrate degradation; glycolysis; pyruvate from D-glyceraldehyde 3-phosphate: step 5/5. Allosterically activated by AMP and by several sugar phosphates. Belongs to type II PK. This Haemophilus influenzae (strain ATCC 51907 / DSM 11121 / KW20 / Rd) protein is Pyruvate kinase (pykA).